A 231-amino-acid polypeptide reads, in one-letter code: Trypsin-2 (231 aa).

Residues 1–4 (AAFA) form the signal peptide. A propeptide spans 5–9 (TEDDK) (activation peptide). The 220-residue stretch at 10-229 (IVGGYECKAY…FNDWLTSTMA (220 aa)) folds into the Peptidase S1 domain. Cystine bridges form between C16–C145, C34–C50, C118–C218, C125–C191, C156–C170, and C181–C205. H49 functions as the Charge relay system in the catalytic mechanism. 4 residues coordinate Ca(2+): E61, N63, V66, and E71. D93 (charge relay system) is an active-site residue. Residue S185 is the Charge relay system of the active site.

This sequence belongs to the peptidase S1 family. Ca(2+) is required as a cofactor.

The protein resides in the secreted. The protein localises to the extracellular space. The enzyme catalyses Preferential cleavage: Arg-|-Xaa, Lys-|-Xaa.. The sequence is that of Trypsin-2 from Salmo salar (Atlantic salmon).